Reading from the N-terminus, the 184-residue chain is TATA-box-binding protein (184 aa).

2 repeat units span residues 9 to 85 and 100 to 178.

The protein belongs to the TBP family.

In terms of biological role, general factor that plays a role in the activation of archaeal genes transcribed by RNA polymerase. Binds specifically to the TATA box promoter element which lies close to the position of transcription initiation. This chain is TATA-box-binding protein, found in Picrophilus torridus (strain ATCC 700027 / DSM 9790 / JCM 10055 / NBRC 100828 / KAW 2/3).